The sequence spans 728 residues: Catalase-peroxidase 1 (728 aa).

A cross-link (tryptophyl-tyrosyl-methioninium (Trp-Tyr) (with M-244)) is located at residues 91-218 (WHSAGTYRTA…LAAVQMGLIY (128 aa)). The active-site Proton acceptor is the His92. The tryptophyl-tyrosyl-methioninium (Tyr-Met) (with W-91) cross-link spans 218 to 244 (YVNPEGPDGNPDPVAAARDIRDTFARM). His259 contributes to the heme b binding site.

Belongs to the peroxidase family. Peroxidase/catalase subfamily. Homodimer or homotetramer. Heme b serves as cofactor. Formation of the three residue Trp-Tyr-Met cross-link is important for the catalase, but not the peroxidase activity of the enzyme.

The enzyme catalyses H2O2 + AH2 = A + 2 H2O. It carries out the reaction 2 H2O2 = O2 + 2 H2O. In terms of biological role, bifunctional enzyme with both catalase and broad-spectrum peroxidase activity. The polypeptide is Catalase-peroxidase 1 (Burkholderia ambifaria (strain MC40-6)).